The primary structure comprises 704 residues: Tryptophan synthase (704 aa).

The interval 1-292 (MEAIKKVFEQ…QLTPNAETAK (292 aa)) is tryptophan synthase alpha chain. Active-site proton acceptor residues include Glu49 and Asp60. A tryptophan synthase beta chain region spans residues 293–704 (GVENILPARF…HVSSNAIPSK (412 aa)). N6-(pyridoxal phosphate)lysine is present on Lys380.

The protein in the N-terminal section; belongs to the TrpA family. In the C-terminal section; belongs to the TrpB family. The cofactor is pyridoxal 5'-phosphate.

It carries out the reaction (1S,2R)-1-C-(indol-3-yl)glycerol 3-phosphate + L-serine = D-glyceraldehyde 3-phosphate + L-tryptophan + H2O. It functions in the pathway amino-acid biosynthesis; L-tryptophan biosynthesis; L-tryptophan from chorismate: step 5/5. The chain is Tryptophan synthase (TRP-1) from Coprinopsis cinerea (strain Okayama-7 / 130 / ATCC MYA-4618 / FGSC 9003) (Inky cap fungus).